The sequence spans 433 residues: Keratin, type I cytoskeletal 17 (433 aa).

Residues 1-24 (MTTTIRQFTSSSSIKGSSGLGGGS) form a disordered region. The tract at residues 1–83 (MTTTIRQFTS…GGVDGLLAGG (83 aa)) is head. Phosphoserine occurs at positions 12 and 13. K15 is covalently cross-linked (Glycyl lysine isopeptide (Lys-Gly) (interchain with G-Cter in SUMO1); alternate). A Glycyl lysine isopeptide (Lys-Gly) (interchain with G-Cter in SUMO2); alternate cross-link involves residue K15. S25, S32, S34, and S39 each carry phosphoserine. The residue at position 44 (S44) is a Phosphoserine; by RPS6KA1. The interval 84–120 (EKATMQNLNDRLASYLDKVRALEEANTELEVKIRDWY) is coil 1A. The 312-residue stretch at 84-395 (EKATMQNLND…RLLEGEDAHL (312 aa)) folds into the IF rod domain. Phosphothreonine is present on T110. A linker 1 region spans residues 121–138 (QKQAPGPARDYSAYYQTI). The coil 1B stretch occupies residues 139–230 (EDLKNKILVA…NHEEEMNALR (92 aa)). The interval 231-250 (GQVGGEINVEMDAAPGVDLS) is linker 12. The tract at residues 251–392 (RILSEMRDQY…TYRRLLEGED (142 aa)) is coil 2. Residue K278 forms a Glycyl lysine isopeptide (Lys-Gly) (interchain with G-Cter in SUMO2) linkage. Position 279 is a phosphothreonine (T279). S323 is subject to Phosphoserine. Residues 393 to 433 (AHLTQYKPKEPVTTRQVRTIVEEVQDGKVISSREQVHQTTR) are tail. Glycyl lysine isopeptide (Lys-Gly) (interchain with G-Cter in SUMO1); alternate cross-links involve residues K399, K401, and K420. Glycyl lysine isopeptide (Lys-Gly) (interchain with G-Cter in SUMO2); alternate cross-links involve residues K399, K401, and K420.

It belongs to the intermediate filament family. Heterodimer of a type I and a type II keratin. KRT17 associates with KRT6 isomers (KRT6A or KRT6B). Interacts with TRADD and SFN. Phosphorylation at Ser-44 occurs in a growth- and stress-dependent fashion in skin keratinocytes, it has no effect on filament organization.

The protein resides in the cytoplasm. Functionally, type I keratin involved in the formation and maintenance of various skin appendages, specifically in determining shape and orientation of hair. Required for the correct growth of hair follicles, in particular for the persistence of the anagen (growth) state. Modulates the function of TNF-alpha in the specific context of hair cycling. Regulates protein synthesis and epithelial cell growth through binding to the adapter protein SFN and by stimulating Akt/mTOR pathway. Involved in tissue repair. May be a marker of basal cell differentiation in complex epithelia and therefore indicative of a certain type of epithelial 'stem cells'. Acts as a promoter of epithelial proliferation by acting a regulator of immune response in skin: promotes Th1/Th17-dominated immune environment contributing to the development of basaloid skin tumors. May act as an autoantigen in the immunopathogenesis of psoriasis, with certain peptide regions being a major target for autoreactive T-cells and hence causing their proliferation. This is Keratin, type I cytoskeletal 17 from Rattus norvegicus (Rat).